The chain runs to 199 residues: N-(5'-phosphoribosyl)anthranilate isomerase (199 aa).

This sequence belongs to the TrpF family.

The enzyme catalyses N-(5-phospho-beta-D-ribosyl)anthranilate = 1-(2-carboxyphenylamino)-1-deoxy-D-ribulose 5-phosphate. Its pathway is amino-acid biosynthesis; L-tryptophan biosynthesis; L-tryptophan from chorismate: step 3/5. The protein is N-(5'-phosphoribosyl)anthranilate isomerase of Clostridium kluyveri (strain NBRC 12016).